A 3259-amino-acid chain; its full sequence is Striated muscle-specific serine/threonine-protein kinase (3259 aa).

A disordered region spans residues 1-30 (MQKARGTRGEDAGTRAPPSPGVPPKRAKVG). Residue arginine 33 is modified to Omega-N-methylarginine. One can recognise an Ig-like 1 domain in the interval 45-126 (PVFLRPLKNA…GKASCEAVLT (82 aa)). Serine 141 carries the post-translational modification Phosphoserine. Disordered stretches follow at residues 155–185 (RAFS…TSEE), 198–226 (EQEA…GPRH), 278–716 (PSGL…DDSY), and 816–880 (VRPG…KVSL). Polar residues predominate over residues 158–185 (STPTGGSDTLVGTSLDTPPTSVTGTSEE). Residues 301–317 (PALPPPSKSALLPPPSP) show a composition bias toward pro residues. Phosphoserine occurs at positions 368 and 375. Position 379 is a phosphothreonine (threonine 379). Serine 382 and serine 385 each carry phosphoserine. Residues 404-422 (ILDKLQFFEERRRSLERSD) are compositionally biased toward basic and acidic residues. Position 423 is a phosphoserine (serine 423). Phosphothreonine is present on threonine 453. Residues serine 457, serine 463, serine 493, serine 511, serine 531, and serine 554 each carry the phosphoserine modification. Residues 459–473 (EELRSPRGSVAERRR) are compositionally biased toward basic and acidic residues. The segment covering 510 to 522 (TSREELVRSHESL) has biased composition (basic and acidic residues). 2 stretches are compositionally biased toward basic and acidic residues: residues 624-638 (PESR…KREP) and 663-680 (EKNR…RGPE). The Ig-like 2 domain occupies 727–817 (PVFEIPLQNM…ASCASSLAVR (91 aa)). Residues 820 to 830 (ASTSPFSSPIT) show a composition bias toward polar residues. 3 consecutive Ig-like domains span residues 874-963 (PTFK…ARLE), 968-1056 (PESR…DELT), and 1069-1157 (PLFT…AQLY). Cysteine 994 and cysteine 1046 are disulfide-bonded. Serine 1133 and serine 1177 each carry phosphoserine. The interval 1162–1185 (RTAASGPSSKLEKMPSIPEEPEHG) is disordered. The Ig-like 6 domain maps to 1193–1283 (PDFLRPLQDL…AACYAHLYVT (91 aa)). The Fibronectin type-III 1 domain occupies 1290–1387 (PDGAPQVVAV…PSEPVQLLEH (98 aa)). The segment covering 1367 to 1379 (SSGKSSSKPSAPS) has biased composition (low complexity). A disordered region spans residues 1367-1386 (SSGKSSSKPSAPSEPVQLLE). The region spanning 1490–1578 (PRFESIMEDV…GEVSCKAELS (89 aa)) is the Ig-like 7 domain. The Protein kinase 1 domain maps to 1606–1859 (YDIHQEIGRG…AEETLEHPWF (254 aa)). Residues 1612–1620 (IGRGAFSYL) and lysine 1635 contribute to the ATP site. The active-site Proton acceptor is aspartate 1724. Disordered stretches follow at residues 1913 to 2244 (MPRR…QMPA), 2336 to 2451 (AKFK…SPVL), and 2463 to 2562 (RLSS…SQPN). Positions 1918-1927 (PPSGGLSSSS) are enriched in low complexity. Phosphoserine is present on residues serine 1993, serine 2004, serine 2019, serine 2020, and serine 2042. Residues 2009 to 2019 (SPRRPELRRGS) show a composition bias toward basic and acidic residues. Arginine 2060 bears the Asymmetric dimethylarginine; alternate mark. The residue at position 2060 (arginine 2060) is an Omega-N-methylarginine; alternate. A compositionally biased stretch (low complexity) spans 2069 to 2081 (AQRLQALRQRLLR). Serine 2114 and serine 2135 each carry phosphoserine. At arginine 2144 the chain carries Omega-N-methylarginine. Polar residues predominate over residues 2168 to 2179 (ESPSLSALSETQ). Over residues 2180 to 2189 (PPSPALPSAP) the composition is skewed to pro residues. Serine 2182 and serine 2207 each carry phosphoserine. Polar residues predominate over residues 2193–2207 (ITKSPEPSAATSRDS). Pro residues predominate over residues 2208-2218 (PQPPAPQPVPE). Basic and acidic residues predominate over residues 2219-2229 (KIPEPKPEPVR). The segment covering 2230 to 2244 (AAKPAQPPLALQMPA) has biased composition (low complexity). Basic and acidic residues predominate over residues 2336–2345 (AKFKRSRESP). The span at 2346–2355 (LSRGLRLLSR) shows a compositional bias: low complexity. Residues 2356 to 2372 (SRSEERGPFRGAEDDGI) show a composition bias toward basic and acidic residues. The residue at position 2376 (serine 2376) is a Phosphoserine. Threonine 2380 carries the phosphothreonine modification. Over residues 2384 to 2395 (LVRRPERSRSVQ) the composition is skewed to basic and acidic residues. Serine 2410, serine 2414, serine 2438, serine 2439, serine 2444, and serine 2448 each carry phosphoserine. Residues 2463 to 2484 (RLSSRLQRSGSSEDSGGASGRS) show a composition bias toward low complexity. The segment covering 2510-2520 (QLASQTGATTP) has biased composition (polar residues). Serine 2521 and serine 2524 each carry phosphoserine. A compositionally biased stretch (low complexity) spans 2521–2540 (SAESLGSEASGTSGSSAPGE). The span at 2543–2554 (SRHRWGLSRLRK) shows a compositional bias: basic residues. The residue at position 2559 (serine 2559) is a Phosphoserine. The Ig-like 8 domain maps to 2583 to 2673 (PPVFHIKLKD…GSITSSCTVA (91 aa)). A disulfide bridge connects residues cysteine 2605 and cysteine 2657. Residues 2680 to 2774 (KLAPPEVPQT…KVFIRGTQDS (95 aa)) enclose the Fibronectin type-III 2 domain. Threonine 2771 is subject to Phosphothreonine. Disordered stretches follow at residues 2771–2829 (TQDS…MSAN) and 2855–2957 (TQQA…PQKP). A Phosphoserine modification is found at serine 2774. Positions 2793–2810 (RAPPPDSPTSLVPTPPLA) are enriched in pro residues. Positions 2814-2828 (SQASTLSPSTSSMSA) are enriched in low complexity. One can recognise a Fibronectin type-III 3 domain in the interval 2859–2965 (EPSPPSILVT…KPYTFLEEKA (107 aa)). Polar residues predominate over residues 2880–2907 (GTLTPTSSPQGVKPAPSSSSLYMVTSFV). The segment covering 2910–2924 (PPDPQPPAPEPPPEP) has biased composition (pro residues). The segment covering 2940–2950 (SSPTPESTTLR) has biased composition (polar residues). Position 2941 is a phosphoserine (serine 2941). The 253-residue stretch at 2958-3210 (YTFLEEKARG…LQDCLAHPWL (253 aa)) folds into the Protein kinase 2 domain. ATP is bound by residues 2964–2972 (KARGRFGVV) and lysine 2987. The active-site Proton acceptor is aspartate 3077.

Belongs to the protein kinase superfamily. CAMK Ser/Thr protein kinase family. As to quaternary structure, interacts with MTM1. May be autophosphorylated. Isoform 2 is highly expressed in differentiated arterial smooth muscle cells (ASMC) in the medial layer of the aorta. Weakly detected in brain and testis and to a lesser extent in organs rich in striated muscle or visceral smooth muscle.

It localises to the nucleus. The enzyme catalyses L-seryl-[protein] + ATP = O-phospho-L-seryl-[protein] + ADP + H(+). The catalysed reaction is L-threonyl-[protein] + ATP = O-phospho-L-threonyl-[protein] + ADP + H(+). Functionally, isoform 2 may have a role in regulating the growth and differentiation of arterial smooth muscle cells. In Rattus norvegicus (Rat), this protein is Striated muscle-specific serine/threonine-protein kinase (Speg).